The chain runs to 155 residues: Ribosomal RNA large subunit methyltransferase H (155 aa).

S-adenosyl-L-methionine is bound by residues L72, G103, and 122–127 (LSDLTL).

The protein belongs to the RNA methyltransferase RlmH family. As to quaternary structure, homodimer.

It is found in the cytoplasm. It catalyses the reaction pseudouridine(1915) in 23S rRNA + S-adenosyl-L-methionine = N(3)-methylpseudouridine(1915) in 23S rRNA + S-adenosyl-L-homocysteine + H(+). In terms of biological role, specifically methylates the pseudouridine at position 1915 (m3Psi1915) in 23S rRNA. The chain is Ribosomal RNA large subunit methyltransferase H from Albidiferax ferrireducens (strain ATCC BAA-621 / DSM 15236 / T118) (Rhodoferax ferrireducens).